The sequence spans 301 residues: MNPAVDNEFQQWLSQINQVCGNFTGRLLTERYTGVLDTHFAKGLKLSTVTTSGVNLSRTWQEVKGSDDAWFYTVFQLSGQAIMEQDERQVQIGAGDITLLDASRPCSLYWQESSKQISLLLPRTLLEQYFPHQKPICAERLDADLPMVQLSHRLLQESMNNPALSETESEAALQAMVCLLRPVLHQRESVQPRRERQFQKVVTLIDDNIREEILRPEWIAGETGMSVRSLYRMFADKGLVVAQYIRNRRLDFCADAIRHAADDEKLAGIGFHWGFSDQSHFSTVFKQRFGMTPGEYRRKFR.

The HTH araC/xylS-type domain maps to 199–299; that stretch reads QKVVTLIDDN…GMTPGEYRRK (101 aa). DNA-binding regions (H-T-H motif) lie at residues 217-238 and 266-289; these read EWIA…ADKG and LAGI…KQRF.

Its function is as follows. Positive regulator of tynA/maoA and feaB/padA, the genes for 2-phenylethylamine catabolism. This Escherichia coli (strain K12) protein is Transcriptional activator FeaR (feaR).